The following is a 444-amino-acid chain: Protein kinase C and casein kinase substrate in neurons protein 1 (444 aa).

Residues S2 and S79 each carry the phosphoserine modification. In terms of domain architecture, F-BAR spans 13 to 283 (EETTDSFWEV…AIRGADAQED (271 aa)). The stretch at 26–275 (KRTVKRIDDG…HVYRELEQAI (250 aa)) forms a coiled coil. Disordered stretches follow at residues 175–194 (MNSKTEQSVTPEQQKKLQDK) and 309–386 (LPHT…DDSK). At T184 the chain carries Phosphothreonine. The segment covering 314-324 (TKKEKQPKKAE) has biased composition (basic and acidic residues). The span at 329-351 (TNATGAVESTSQAGDRGSVSSYD) shows a compositional bias: polar residues. Residues S346, S348, S349, S361, and S365 each carry the phosphoserine modification. One can recognise an SH3 domain in the interval 385 to 444 (SKGVRVRALYDYDGQEQDELSFKAGDELTKLGEEDEQGWCRGRLDSGQLGLYPANYVEAI). Y394 bears the Phosphotyrosine mark. Phosphoserine is present on residues S405 and S430.

Belongs to the PACSIN family. As to quaternary structure, may form heterooligomers with other PACSINs. Interacts with MAPT. Interacts with TRPV4. Interacts (via SH3 domain) with SYNJ1 and WASL. Interacts with DNM2 and DNM3. Interacts with both COBL and DBNL. Identified in a complex composed of COBL, PACSIN1 and WASL. Interacts with EHD1 and EHD3. Homodimer. Interacts (via SH3 domain) with DNM1; the interaction is reduced by DNM1 phosphorylation. Phosphorylated by casein kinase 2 (CK2) and protein kinase C (PKC). In terms of tissue distribution, highly expressed in brain and, at much lower levels, in heart and pancreas.

The protein localises to the cytoplasm. Its subcellular location is the cell projection. It is found in the synapse. The protein resides in the synaptosome. It localises to the ruffle membrane. The protein localises to the membrane. Its subcellular location is the cytoplasmic vesicle membrane. It is found in the cytosol. The protein resides in the cell membrane. Plays a role in the reorganization of the microtubule cytoskeleton via its interaction with MAPT; this decreases microtubule stability and inhibits MAPT-induced microtubule polymerization. Plays a role in cellular transport processes by recruiting DNM1, DNM2 and DNM3 to membranes. Plays a role in the reorganization of the actin cytoskeleton and in neuron morphogenesis via its interaction with COBL and WASL, and by recruiting COBL to the cell cortex. Plays a role in the regulation of neurite formation, neurite branching and the regulation of neurite length. Required for normal synaptic vesicle endocytosis; this process retrieves previously released neurotransmitters to accommodate multiple cycles of neurotransmission. Required for normal excitatory and inhibitory synaptic transmission. Binds to membranes via its F-BAR domain and mediates membrane tubulation. In Homo sapiens (Human), this protein is Protein kinase C and casein kinase substrate in neurons protein 1 (PACSIN1).